We begin with the raw amino-acid sequence, 205 residues long: Holliday junction branch migration complex subunit RuvA (205 aa).

The tract at residues 1-64 (MIGKLKGILE…EEAIRLFGFV (64 aa)) is domain I. Positions 65-143 (AKAEQEWFCL…PFNDNALHFT (79 aa)) are domain II. Positions 144–149 (PQPHLE) are flexible linker. Residues 150 to 205 (VTHQPTNDALSALVKLGFERDQAARALALAMNALEGETVSSALLIRHSLKLLSPST) are domain III.

It belongs to the RuvA family. In terms of assembly, homotetramer. Forms an RuvA(8)-RuvB(12)-Holliday junction (HJ) complex. HJ DNA is sandwiched between 2 RuvA tetramers; dsDNA enters through RuvA and exits via RuvB. An RuvB hexamer assembles on each DNA strand where it exits the tetramer. Each RuvB hexamer is contacted by two RuvA subunits (via domain III) on 2 adjacent RuvB subunits; this complex drives branch migration. In the full resolvosome a probable DNA-RuvA(4)-RuvB(12)-RuvC(2) complex forms which resolves the HJ.

Its subcellular location is the cytoplasm. The RuvA-RuvB-RuvC complex processes Holliday junction (HJ) DNA during genetic recombination and DNA repair, while the RuvA-RuvB complex plays an important role in the rescue of blocked DNA replication forks via replication fork reversal (RFR). RuvA specifically binds to HJ cruciform DNA, conferring on it an open structure. The RuvB hexamer acts as an ATP-dependent pump, pulling dsDNA into and through the RuvAB complex. HJ branch migration allows RuvC to scan DNA until it finds its consensus sequence, where it cleaves and resolves the cruciform DNA. In Bartonella quintana (strain Toulouse) (Rochalimaea quintana), this protein is Holliday junction branch migration complex subunit RuvA.